Consider the following 149-residue polypeptide: UPF0179 protein Hlac_2319 (149 aa).

This sequence belongs to the UPF0179 family.

The sequence is that of UPF0179 protein Hlac_2319 from Halorubrum lacusprofundi (strain ATCC 49239 / DSM 5036 / JCM 8891 / ACAM 34).